We begin with the raw amino-acid sequence, 529 residues long: Zinc finger protein 572 (529 aa).

The segment at 1 to 125 (MEQEQKLLVS…TGPAGQQNPS (125 aa)) is disordered. K6 is covalently cross-linked (Glycyl lysine isopeptide (Lys-Gly) (interchain with G-Cter in SUMO2)). Residues 22-42 (KNTITGDESKNNLKTVQFSNS) are compositionally biased toward polar residues. Residues 43–68 (KADKERASKWSRSDGPENYKDEDTKE) are compositionally biased toward basic and acidic residues. Over residues 87-96 (NDSNLGSQRN) the composition is skewed to polar residues. 12 consecutive C2H2-type zinc fingers follow at residues 131–153 (YKCS…QRTH), 159–181 (YRCS…LRTH), 187–209 (YQCG…ERTH), 215–237 (YKCP…HRSH), 243–265 (YECP…QRTH), 271–293 (YKCP…QRTH), 299–321 (YKCP…QRIH), 327–349 (YQCI…QKMH), 383–405 (YKCC…QRTH), 411–433 (YRCS…QRTH), 439–461 (YKCP…RRTH), and 467–489 (YKCT…RKIH).

Belongs to the krueppel C2H2-type zinc-finger protein family.

The protein resides in the nucleus. Its function is as follows. May be involved in transcriptional regulation. The sequence is that of Zinc finger protein 572 (ZNF572) from Bos taurus (Bovine).